A 189-amino-acid polypeptide reads, in one-letter code: Crossover junction endodeoxyribonuclease RuvC (189 aa).

Active-site residues include Asp11, Glu71, and Asp143. Mg(2+) contacts are provided by Asp11, Glu71, and Asp143.

Belongs to the RuvC family. In terms of assembly, homodimer which binds Holliday junction (HJ) DNA. The HJ becomes 2-fold symmetrical on binding to RuvC with unstacked arms; it has a different conformation from HJ DNA in complex with RuvA. In the full resolvosome a probable DNA-RuvA(4)-RuvB(12)-RuvC(2) complex forms which resolves the HJ. The cofactor is Mg(2+).

It localises to the cytoplasm. It catalyses the reaction Endonucleolytic cleavage at a junction such as a reciprocal single-stranded crossover between two homologous DNA duplexes (Holliday junction).. The RuvA-RuvB-RuvC complex processes Holliday junction (HJ) DNA during genetic recombination and DNA repair. Endonuclease that resolves HJ intermediates. Cleaves cruciform DNA by making single-stranded nicks across the HJ at symmetrical positions within the homologous arms, yielding a 5'-phosphate and a 3'-hydroxyl group; requires a central core of homology in the junction. The consensus cleavage sequence is 5'-(A/T)TT(C/G)-3'. Cleavage occurs on the 3'-side of the TT dinucleotide at the point of strand exchange. HJ branch migration catalyzed by RuvA-RuvB allows RuvC to scan DNA until it finds its consensus sequence, where it cleaves and resolves the cruciform DNA. The protein is Crossover junction endodeoxyribonuclease RuvC of Methylorubrum populi (strain ATCC BAA-705 / NCIMB 13946 / BJ001) (Methylobacterium populi).